The primary structure comprises 528 residues: Tyrosine 3-monooxygenase (528 aa).

Ser-19 is modified (phosphoserine; by CaMK2). Residues 33–65 (GQGAPGPSLTGSPWPGTAAPAASYTPTPRSPRF) are disordered. Over residues 47–59 (PGTAAPAASYTPT) the composition is skewed to low complexity. Ser-62 is modified (phosphoserine). A Phosphoserine; by CaMK2 and PKA modification is found at Ser-71. Fe cation is bound by residues His-361, His-366, and Glu-406. A Phosphoserine modification is found at Ser-502.

This sequence belongs to the biopterin-dependent aromatic amino acid hydroxylase family. In terms of assembly, homotetramer. Interacts (when phosphorylated at Ser-19) with YWHAG; one YWHAG dimer binds to one TH tetramer and this interaction may influence the phosphorylation and dephosphorylation of other sites. Interacts with NT5DC2; the interaction results in reduced phosphorylation and decreased catalytic activity of TH. Fe(2+) is required as a cofactor. Phosphorylated on Ser-19, Ser-62 and Ser-71 by several protein kinases with different site specificities. Phosphorylation at Ser-62 and Ser-71 leads to an increase of TH activity. Phosphorylation at Ser-71 activates the enzyme and also counteracts the feedback inhibition of TH by catecholamines. Phosphorylation of Ser-19 and Ser-62 triggers the proteasomal degradation of TH through the ubiquitin-proteasome pathway. Phosphorylation at Ser-62 facilitates transport of TH from the soma to the nerve terminals via the microtubule network. Phosphorylation at Ser-19 induces the high-affinity binding to the 14-3-3 protein YWHAG; this interaction may influence the phosphorylation and dephosphorylation of other sites. Ser-19 increases the phosphorylation at Ser-71 in a hierarchical manner, leading to increased activity. As to expression, mainly expressed in the brain and adrenal glands.

Its subcellular location is the cytoplasm. It localises to the perinuclear region. The protein localises to the nucleus. The protein resides in the cell projection. It is found in the axon. Its subcellular location is the cytoplasmic vesicle. It localises to the secretory vesicle. The protein localises to the synaptic vesicle. The catalysed reaction is (6R)-L-erythro-5,6,7,8-tetrahydrobiopterin + L-tyrosine + O2 = (4aS,6R)-4a-hydroxy-L-erythro-5,6,7,8-tetrahydrobiopterin + L-dopa. It functions in the pathway catecholamine biosynthesis; dopamine biosynthesis; dopamine from L-tyrosine: step 1/2. Its activity is regulated as follows. Inhibited in feedback fashion by the catecholamine neurotransmitters, especially by dopamine in competition with tetrahydrobiopterin. Phosphorylation of several Ser/Thr residues in the N-terminus regulates the catalytic activity. Ser-62 and Ser-71 are readily phosphorylated to activate the catalytic activity. A Cysteine modification induced by N-ethylmaleimide (NEM), inhibits tyrosine 3-monooxygenase activity through the modification of the Cys-207. In terms of biological role, catalyzes the conversion of L-tyrosine to L-dihydroxyphenylalanine (L-Dopa), the rate-limiting step in the biosynthesis of catecholamines, dopamine, noradrenaline, and adrenaline. Uses tetrahydrobiopterin and molecular oxygen to convert tyrosine to L-Dopa. In addition to tyrosine, is able to catalyze the hydroxylation of phenylalanine and tryptophan with lower specificity. Positively regulates the regression of retinal hyaloid vessels during postnatal development. Functionally, lacks catalytic activity. The chain is Tyrosine 3-monooxygenase from Homo sapiens (Human).